The chain runs to 366 residues: Flagellar P-ring protein (366 aa).

Residues 1 to 20 (MVIKFLSALILLLVTTAAQA) form the signal peptide.

It belongs to the FlgI family. The basal body constitutes a major portion of the flagellar organelle and consists of four rings (L,P,S, and M) mounted on a central rod.

The protein resides in the periplasm. It is found in the bacterial flagellum basal body. In terms of biological role, assembles around the rod to form the L-ring and probably protects the motor/basal body from shearing forces during rotation. The polypeptide is Flagellar P-ring protein (Escherichia coli O1:K1 / APEC).